The primary structure comprises 100 residues: NADH-quinone oxidoreductase subunit K (100 aa).

Transmembrane regions (helical) follow at residues 4-24, 29-49, and 60-80; these read LSWYLLLSATLFSIGLIGFVI, IVMLMCLEIMFNAVNIAFASF, and IFVLFSIAVAACEAVIGLAIV.

Belongs to the complex I subunit 4L family. NDH-1 is composed of 14 different subunits. Subunits NuoA, H, J, K, L, M, N constitute the membrane sector of the complex.

It is found in the cell inner membrane. The catalysed reaction is a quinone + NADH + 5 H(+)(in) = a quinol + NAD(+) + 4 H(+)(out). In terms of biological role, NDH-1 shuttles electrons from NADH, via FMN and iron-sulfur (Fe-S) centers, to quinones in the respiratory chain. The immediate electron acceptor for the enzyme in this species is believed to be ubiquinone. Couples the redox reaction to proton translocation (for every two electrons transferred, four hydrogen ions are translocated across the cytoplasmic membrane), and thus conserves the redox energy in a proton gradient. This Thermodesulfovibrio yellowstonii (strain ATCC 51303 / DSM 11347 / YP87) protein is NADH-quinone oxidoreductase subunit K.